The sequence spans 388 residues: S-adenosylmethionine synthase (388 aa).

ATP is bound at residue His17. Asp19 serves as a coordination point for Mg(2+). A K(+)-binding site is contributed by Glu45. The L-methionine site is built by Glu58 and Gln101. Positions 101–111 (QSPDIGQGVDT) are flexible loop. Residues 160 to 162 (DGK), 226 to 227 (RF), Asp235, 241 to 242 (RK), Ala258, and Lys262 contribute to the ATP site. Asp235 lines the L-methionine pocket. Lys266 serves as a coordination point for L-methionine.

Belongs to the AdoMet synthase family. Homotetramer; dimer of dimers. The cofactor is Mg(2+). K(+) serves as cofactor.

It localises to the cytoplasm. The enzyme catalyses L-methionine + ATP + H2O = S-adenosyl-L-methionine + phosphate + diphosphate. The protein operates within amino-acid biosynthesis; S-adenosyl-L-methionine biosynthesis; S-adenosyl-L-methionine from L-methionine: step 1/1. In terms of biological role, catalyzes the formation of S-adenosylmethionine (AdoMet) from methionine and ATP. The overall synthetic reaction is composed of two sequential steps, AdoMet formation and the subsequent tripolyphosphate hydrolysis which occurs prior to release of AdoMet from the enzyme. This chain is S-adenosylmethionine synthase, found in Anaeromyxobacter sp. (strain K).